Consider the following 163-residue polypeptide: Peptide deformylase (163 aa).

Residues cysteine 91 and histidine 133 each coordinate Fe cation. Glutamate 134 is an active-site residue. Histidine 137 contributes to the Fe cation binding site.

The protein belongs to the polypeptide deformylase family. Requires Fe(2+) as cofactor.

It carries out the reaction N-terminal N-formyl-L-methionyl-[peptide] + H2O = N-terminal L-methionyl-[peptide] + formate. Removes the formyl group from the N-terminal Met of newly synthesized proteins. Requires at least a dipeptide for an efficient rate of reaction. N-terminal L-methionine is a prerequisite for activity but the enzyme has broad specificity at other positions. This chain is Peptide deformylase, found in Lachnoclostridium phytofermentans (strain ATCC 700394 / DSM 18823 / ISDg) (Clostridium phytofermentans).